A 318-amino-acid chain; its full sequence is NADH-ubiquinone oxidoreductase chain 1 (318 aa).

8 consecutive transmembrane segments (helical) span residues 2–22 (FMIN…FLTL), 70–90 (MFII…IPLP), 100–120 (LGIL…LWSG), 147–167 (AIIL…TLII), 171–191 (YLWL…STLA), 217–237 (AGPF…MNIF), 254–276 (LYSI…IRAS), and 294–314 (LPLT…LSSI).

This sequence belongs to the complex I subunit 1 family. In terms of assembly, core subunit of respiratory chain NADH dehydrogenase (Complex I) which is composed of 45 different subunits.

It is found in the mitochondrion inner membrane. The catalysed reaction is a ubiquinone + NADH + 5 H(+)(in) = a ubiquinol + NAD(+) + 4 H(+)(out). Its function is as follows. Core subunit of the mitochondrial membrane respiratory chain NADH dehydrogenase (Complex I) which catalyzes electron transfer from NADH through the respiratory chain, using ubiquinone as an electron acceptor. Essential for the catalytic activity and assembly of complex I. This chain is NADH-ubiquinone oxidoreductase chain 1 (MT-ND1), found in Equus asinus (Donkey).